We begin with the raw amino-acid sequence, 282 residues long: Short-chain dehydrogenase/reductase prx7 (282 aa).

Asparagine 23, asparagine 70, tyrosine 150, lysine 154, valine 183, and threonine 185 together coordinate NADP(+). Catalysis depends on tyrosine 150, which acts as the Proton acceptor. Residue lysine 154 is the Lowers pKa of active site Tyr of the active site.

Belongs to the short-chain dehydrogenases/reductases (SDR) family.

Its pathway is sesquiterpene biosynthesis. Short-chain dehydrogenase/reductase; part of the gene cluster that mediates the biosynthesis of PR-toxin, a bicyclic sesquiterpene belonging to the eremophilane class and acting as a mycotoxin. The first step of the pathway is catalyzed by the aristolochene synthase which performs the cyclization of trans,trans-farnesyl diphosphate (FPP) to the bicyclic sesquiterpene aristolochene. Following the formation of aristolochene, the non-oxygenated aristolochene is converted to the trioxygenated intermediate eremofortin B, via 7-epi-neopetasone. This conversion appears to involve three enzymes, a hydroxysterol oxidase-like enzyme, the quinone-oxidase prx3 that forms the quinone-type-structure in the bicyclic nucleus of aristolochene with the C8-oxo group and the C-3 hydroxyl group, and the P450 monooxygenase prx9 that introduces the epoxide at the double bond between carbons 1 and 2. No monoxy or dioxy-intermediates have been reported to be released to the broth, so these three early oxidative reactions may be coupled together. Eremofortin B is further oxidized by another P450 monooxygenase, that introduces a second epoxide between carbons 7 and 11 prior to acetylation to eremofortin A by the acetyltransferase prx11. The second epoxidation may be performed by a second P450 monooxygenase. After the acetylation step, eremofortin A is converted to eremofortin C and then to PR-toxin. First the conversion of eremofortin A to eremofortin C proceeds by oxidation of the side chain of the molecule at C-12 and is catalyzed by the short-chain oxidoreductase prx1. The cytochrome P450 monooxygenase prx8 also plays a role in this step. The primary alcohol formed at C-12 is finally oxidized by the short-chain alcohol dehydrogenase prx4 that forms PR-toxin. The chain is Short-chain dehydrogenase/reductase prx7 from Penicillium rubens (strain ATCC 28089 / DSM 1075 / NRRL 1951 / Wisconsin 54-1255) (Penicillium chrysogenum).